The following is a 336-amino-acid chain: Anthranilate phosphoribosyltransferase (336 aa).

5-phospho-alpha-D-ribose 1-diphosphate is bound by residues Gly-82, 85–86 (GD), Thr-90, 92–95 (NIST), 110–118 (KHGNRSVSS), and Ser-122. Gly-82 contributes to the anthranilate binding site. A Mg(2+)-binding site is contributed by Ser-94. An anthranilate-binding site is contributed by Asn-113. Arg-168 provides a ligand contact to anthranilate. Residues Asp-227 and Glu-228 each coordinate Mg(2+).

The protein belongs to the anthranilate phosphoribosyltransferase family. As to quaternary structure, homodimer. Mg(2+) is required as a cofactor.

The enzyme catalyses N-(5-phospho-beta-D-ribosyl)anthranilate + diphosphate = 5-phospho-alpha-D-ribose 1-diphosphate + anthranilate. It participates in amino-acid biosynthesis; L-tryptophan biosynthesis; L-tryptophan from chorismate: step 2/5. Functionally, catalyzes the transfer of the phosphoribosyl group of 5-phosphorylribose-1-pyrophosphate (PRPP) to anthranilate to yield N-(5'-phosphoribosyl)-anthranilate (PRA). The polypeptide is Anthranilate phosphoribosyltransferase (Leptospira interrogans serogroup Icterohaemorrhagiae serovar Lai (strain 56601)).